A 1344-amino-acid chain; its full sequence is Protein stu1 (1344 aa).

Residues 93–131 (LYPLLVERLGDHKERIRAQAAQSFTDMWLAAPEEVEQCV) form an HEAT 1 repeat. Positions 265-292 (HRPVSRAETQASRSVSRLDTHQRPASRM) are disordered. The stretch at 508–544 (VTFTTRILQHVSGACQDKNVQLRLFAAGWLKTLIQKQ) is one HEAT 2 repeat. 5 disordered regions span residues 606-637 (RSLLEKDPANPNAHQSAPKDSGPSRKGLANGT), 651-847 (AAQK…STPR), 914-945 (LTENQTPQPSKVHSDSPIVSNKRVSNQDESVP), 984-1004 (PVTHQPDSVTDSSKPSGLSSS), and 1031-1054 (SLPHRSSPKHNVLGELTSNEPSQR). 2 stretches are compositionally biased toward polar residues: residues 691–705 (VRTVPTGTSLSSLSS) and 735–747 (ATDSSTRHGNQID). The segment covering 748–769 (GSPSAAKSKSSTPSLKSVSSTG) has biased composition (low complexity). Composition is skewed to polar residues over residues 828–847 (FSVTPISPNSVSLETPSTPR) and 914–942 (LTENQTPQPSKVHSDSPIVSNKRVSNQDE). A compositionally biased stretch (low complexity) spans 995–1004 (SSKPSGLSSS).

Belongs to the CLASP family. Interacts with microtubules.

The protein localises to the cytoplasm. The protein resides in the cytoskeleton. It is found in the nucleus. Its subcellular location is the spindle. Functionally, microtubule binding protein that promotes the stabilization of dynamic microtubules. Required for mitotic spindle formation. The protein is Protein stu1 (stu1) of Aspergillus fumigatus (strain ATCC MYA-4609 / CBS 101355 / FGSC A1100 / Af293) (Neosartorya fumigata).